The sequence spans 294 residues: Flavin-dependent thymidylate synthase (294 aa).

Residues 27-250 (GFIRVIDYMG…PFTYEAFEEY (224 aa)) enclose the ThyX domain. Residues threonine 73, 96–98 (RHR), and glutamate 104 each bind FAD. DUMP is bound by residues 93–96 (QWIR), 104–108 (EYSAR), and arginine 189. The ThyX motif motif lies at 96 to 106 (RHRTASVNEYS). FAD-binding positions include 205-207 (NLH) and histidine 211. Arginine 216 is a binding site for dUMP. Catalysis depends on arginine 216, which acts as the Involved in ionization of N3 of dUMP, leading to its activation.

This sequence belongs to the thymidylate synthase ThyX family. As to quaternary structure, homotetramer. FAD is required as a cofactor.

It catalyses the reaction dUMP + (6R)-5,10-methylene-5,6,7,8-tetrahydrofolate + NADPH + H(+) = dTMP + (6S)-5,6,7,8-tetrahydrofolate + NADP(+). The protein operates within pyrimidine metabolism; dTTP biosynthesis. In terms of biological role, catalyzes the reductive methylation of 2'-deoxyuridine-5'-monophosphate (dUMP) to 2'-deoxythymidine-5'-monophosphate (dTMP) while utilizing 5,10-methylenetetrahydrofolate (mTHF) as the methyl donor, and NADPH and FADH(2) as the reductant. The polypeptide is Flavin-dependent thymidylate synthase (Rickettsia bellii (strain RML369-C)).